The sequence spans 181 residues: Protein Syd (181 aa).

Belongs to the Syd family.

It localises to the cell inner membrane. Its function is as follows. Interacts with the SecY protein in vivo. May bind preferentially to an uncomplexed state of SecY, thus functioning either as a chelating agent for excess SecY in the cell or as a regulatory factor that negatively controls the translocase function. The chain is Protein Syd from Escherichia fergusonii (strain ATCC 35469 / DSM 13698 / CCUG 18766 / IAM 14443 / JCM 21226 / LMG 7866 / NBRC 102419 / NCTC 12128 / CDC 0568-73).